We begin with the raw amino-acid sequence, 273 residues long: Dermonecrotic toxin LdSicTox-alphaIB3av (273 aa).

His-5 is an active-site residue. The Mg(2+) site is built by Glu-25 and Asp-27. Residue His-41 is the Nucleophile of the active site. 2 disulfide bridges follow: Cys-45/Cys-51 and Cys-47/Cys-190. Asp-85 is a Mg(2+) binding site.

This sequence belongs to the arthropod phospholipase D family. Class II subfamily. Mg(2+) is required as a cofactor. Expressed by the venom gland.

It is found in the secreted. It carries out the reaction an N-(acyl)-sphingosylphosphocholine = an N-(acyl)-sphingosyl-1,3-cyclic phosphate + choline. The catalysed reaction is an N-(acyl)-sphingosylphosphoethanolamine = an N-(acyl)-sphingosyl-1,3-cyclic phosphate + ethanolamine. The enzyme catalyses a 1-acyl-sn-glycero-3-phosphocholine = a 1-acyl-sn-glycero-2,3-cyclic phosphate + choline. It catalyses the reaction a 1-acyl-sn-glycero-3-phosphoethanolamine = a 1-acyl-sn-glycero-2,3-cyclic phosphate + ethanolamine. Its function is as follows. Dermonecrotic toxins cleave the phosphodiester linkage between the phosphate and headgroup of certain phospholipids (sphingolipid and lysolipid substrates), forming an alcohol (often choline) and a cyclic phosphate. This toxin acts on sphingomyelin (SM). It may also act on ceramide phosphoethanolamine (CPE), lysophosphatidylcholine (LPC) and lysophosphatidylethanolamine (LPE), but not on lysophosphatidylserine (LPS), and lysophosphatidylglycerol (LPG). It acts by transphosphatidylation, releasing exclusively cyclic phosphate products as second products. Induces dermonecrosis, hemolysis, increased vascular permeability, edema, inflammatory response, and platelet aggregation. This is Dermonecrotic toxin LdSicTox-alphaIB3av from Loxosceles deserta (Desert recluse spider).